Reading from the N-terminus, the 1624-residue chain is ATP-binding cassette sub-family A member 6 (1624 aa).

A helical membrane pass occupies residues 31–51 (LLEWSIPIIIGLHMGLFSYLA). Asparagine 84 and asparagine 91 each carry an N-linked (GlcNAc...) asparagine glycan. 6 consecutive transmembrane segments (helical) span residues 222 to 242 (IFIL…SSNV), 267 to 287 (WGLI…IIIT), 297 to 317 (FLVI…VTFL), 326 to 346 (VLTN…GFTV), 356 to 376 (EWVL…KVIF), and 395 to 415 (VMIA…VLAL). The 236-residue stretch at 478–713 (IRIRNIKKEY…WGLGYHLSLF (236 aa)) folds into the ABC transporter 1 domain. 514–521 (GHSGAGKS) contributes to the ATP binding site. The N-linked (GlcNAc...) asparagine glycan is linked to asparagine 576. Transmembrane regions (helical) follow at residues 854–874 (AFLI…IEYV), 971–991 (LHCF…MLNH), 1005–1025 (FIVL…CVIC), 1058–1078 (WCGQ…TSYF), 1094–1114 (IVFS…FLTY), 1130–1150 (WSIC…NGPF), 1154–1174 (LVIS…LVVL), and 1194–1214 (AVDL…IFVL). Positions 1282–1520 (LHKEYAGQKK…FGQDYVLELR (239 aa)) constitute an ABC transporter 2 domain. 1320 to 1327 (GPDGAGKS) lines the ATP pocket.

It belongs to the ABC transporter superfamily. ABCA family. Widely expressed with higher expression in heart, lung, brain, spleen and testis.

Its subcellular location is the golgi apparatus membrane. Functionally, probable transporter which may play a role in macrophage lipid transport and homeostasis. This is ATP-binding cassette sub-family A member 6 (Abca6) from Mus musculus (Mouse).